The following is a 576-amino-acid chain: RING finger and SPRY domain-containing protein 1 (576 aa).

The first 16 residues, 1 to 16 (MIVLGWAVFLASRSLG), serve as a signal peptide directing secretion. A Phosphoserine modification is found at Ser50. Residues 50–99 (SGTDDSVDTQQQQAENSAVPTADTRSQPRDPVRPPRRGRGPHEPRRKKQN) are disordered. The span at 57 to 68 (DTQQQQAENSAV) shows a compositional bias: polar residues. A compositionally biased stretch (basic residues) spans 83–97 (PPRRGRGPHEPRRKK). The 184-residue stretch at 300-483 (LFLKEGRQLT…CEFNFGAKPF (184 aa)) folds into the B30.2/SPRY domain. Residue Asn314 is glycosylated (N-linked (GlcNAc...) asparagine). The RING-type zinc-finger motif lies at 527-562 (CSLCCDEVADTQLKPCGHSDLCMDCALQLETCPLCR).

The protein resides in the secreted. This is RING finger and SPRY domain-containing protein 1 (RSPRY1) from Macaca fascicularis (Crab-eating macaque).